The primary structure comprises 475 residues: Amino acid permease 8 (475 aa).

The segment at Met-1–Asp-22 is disordered. Topologically, residues Met-1–Thr-31 are cytoplasmic. The next 2 membrane-spanning stretches (helical) occupy residues Phe-32 to Ala-52 and Trp-53 to Ile-73. The Cytoplasmic segment spans residues Thr-74–Tyr-120. The helical transmembrane segment at Val-121–Ile-141 threads the bilayer. Topologically, residues Gly-142 to Ser-157 are extracellular. Residues Val-158–Pro-178 form a helical membrane-spanning segment. Topologically, residues Asn-179–Phe-185 are cytoplasmic. A helical transmembrane segment spans residues Leu-186 to Ile-206. The Extracellular portion of the chain corresponds to Ala-207–Lys-236. A helical membrane pass occupies residues Leu-237–Ile-257. Topologically, residues Gln-258 to Leu-276 are cytoplasmic. A helical transmembrane segment spans residues Val-277–Phe-297. Over Gly-298–Pro-314 the chain is Extracellular. The chain crosses the membrane as a helical span at residues Tyr-315–Val-335. Residues Tyr-336–Arg-378 lie on the Cytoplasmic side of the membrane. Residues Leu-379–Phe-398 traverse the membrane as a helical segment. The Extracellular segment spans residues Phe-399–Ala-401. A helical membrane pass occupies residues Ile-402–Ile-424. The Cytoplasmic segment spans residues Ala-425–Leu-441. A helical transmembrane segment spans residues Leu-442–Ile-462. The Extracellular segment spans residues Asn-463 to Asp-475.

The protein belongs to the amino acid/polyamine transporter 2 family. Amino acid/auxin permease (AAAP) (TC 2.A.18.2) subfamily. In terms of tissue distribution, expressed in flower buds, siliques, developing seeds and funiculi.

It is found in the cell membrane. Amino acid-proton symporter. Stereospecific transporter with a broad specificity for glutamate, aspartate and neutral and acidic amino acids. The polypeptide is Amino acid permease 8 (AAP8) (Arabidopsis thaliana (Mouse-ear cress)).